We begin with the raw amino-acid sequence, 288 residues long: Aminoglycoside 6-adenylyltransferase (288 aa).

The catalysed reaction is streptomycin + ATP = 6-O-adenylylstreptomycin + diphosphate. In terms of biological role, mediates bacterial resistance to streptomycin, is probably a streptomycin 6-adenylyltransferase. This chain is Aminoglycoside 6-adenylyltransferase, found in Campylobacter jejuni.